A 589-amino-acid polypeptide reads, in one-letter code: ATP-dependent lipid A-core flippase (589 aa).

5 helical membrane passes run 29–49 (WLLVVAACGALLEAVAGSTFL), 68–88 (ALWLPLGIVGLFLLRGIAGYI), 157–177 (VIGALVVMLWYSWTVTLAILL), 254–274 (LSSAAVQLLGAVGLAMLLLIA), and 283–303 (LSPGDFVSLMTSMIAVIPALK). An ABC transmembrane type-1 domain is found at 32–314 (VVAACGALLE…LTNVQNMLQS (283 aa)). Residues 346–582 (IEFRGITARY…DGLYAYLYSM (237 aa)) form the ABC transporter domain. 380-387 (GRSGSGKS) is an ATP binding site.

It belongs to the ABC transporter superfamily. Lipid exporter (TC 3.A.1.106) family. Homodimer.

Its subcellular location is the cell inner membrane. The catalysed reaction is ATP + H2O + lipid A-core oligosaccharideSide 1 = ADP + phosphate + lipid A-core oligosaccharideSide 2.. Its function is as follows. Involved in lipopolysaccharide (LPS) biosynthesis. Translocates lipid A-core from the inner to the outer leaflet of the inner membrane. Transmembrane domains (TMD) form a pore in the inner membrane and the ATP-binding domain (NBD) is responsible for energy generation. The sequence is that of ATP-dependent lipid A-core flippase from Xylella fastidiosa (strain 9a5c).